Here is a 398-residue protein sequence, read N- to C-terminus: Probable aminomethyltransferase (398 aa).

The protein belongs to the GcvT family. In terms of assembly, the glycine cleavage system is composed of four proteins: P, T, L and H.

It carries out the reaction N(6)-[(R)-S(8)-aminomethyldihydrolipoyl]-L-lysyl-[protein] + (6S)-5,6,7,8-tetrahydrofolate = N(6)-[(R)-dihydrolipoyl]-L-lysyl-[protein] + (6R)-5,10-methylene-5,6,7,8-tetrahydrofolate + NH4(+). Functionally, the glycine cleavage system catalyzes the degradation of glycine. The polypeptide is Probable aminomethyltransferase (Thermococcus kodakarensis (strain ATCC BAA-918 / JCM 12380 / KOD1) (Pyrococcus kodakaraensis (strain KOD1))).